The primary structure comprises 286 residues: ATP synthase gamma chain (286 aa).

This sequence belongs to the ATPase gamma chain family. In terms of assembly, F-type ATPases have 2 components, CF(1) - the catalytic core - and CF(0) - the membrane proton channel. CF(1) has five subunits: alpha(3), beta(3), gamma(1), delta(1), epsilon(1). CF(0) has three main subunits: a, b and c.

Its subcellular location is the cell inner membrane. Produces ATP from ADP in the presence of a proton gradient across the membrane. The gamma chain is believed to be important in regulating ATPase activity and the flow of protons through the CF(0) complex. The protein is ATP synthase gamma chain of Pseudomonas fluorescens (strain SBW25).